Reading from the N-terminus, the 409-residue chain is Torsin-4A (409 aa).

Basic and acidic residues predominate over residues 1 to 16; the sequence is MGEQDPSDRLRGDQLK. Disordered stretches follow at residues 1–28 and 75–99; these read MGEQ…SFSQ and DNLH…KGRV. The span at 17 to 28 shows a compositional bias: polar residues; the sequence is EPNQNGKGSFSQ. The segment covering 88–98 has biased composition (basic residues); it reads PRKRKKKRKGR. A helical transmembrane segment spans residues 120 to 136; it reads CLYLLCIIVFLQVYNAI. ATP is bound at residue 192–199; that stretch reads GPTGVGKS.

This sequence belongs to the ClpA/ClpB family. Torsin subfamily.

The protein localises to the membrane. In Danio rerio (Zebrafish), this protein is Torsin-4A (tor4a).